A 181-amino-acid chain; its full sequence is Minor capsid protein P4 (181 aa).

In terms of assembly, interacts with the major capsid protein.

It is found in the virion. Functionally, one of the minor capsid proteins that constitute a network internal to the major capsid proteins and outside the lipid membrane. The minor capsid proteins glue and stabilize the capsomers. The protein is Minor capsid protein P4 of Chlorella (PBCV-1).